An 85-amino-acid chain; its full sequence is Contulakin-Lt1 (85 aa).

The N-terminal stretch at 1 to 22 (MRTAYWVMVMMMVGITAPLSEG) is a signal peptide. The propeptide occupies 23 to 60 (RKLNDAIRGLVADYLTPQLLQSLVSAPYPEFQLDDPNL). The cysteines at positions 65 and 70 are disulfide-linked. Positions 76-85 (RRRDLKKRNK) are excised as a propeptide.

The protein belongs to the conotoxin C superfamily. As to expression, expressed by the venom duct.

The protein localises to the secreted. Its function is as follows. Acts as an agonist of neurotensin receptors. It binds to human neurotensin type 1 receptor (NTSR1), rat neurotensin types 1 and 2 receptors (NTSR1/NTSR2) and mouse neurotensin type 3 receptor (SORT1). The chain is Contulakin-Lt1 from Conus litteratus (Lettered cone).